Reading from the N-terminus, the 378-residue chain is 1-acyl-sn-glycerol-3-phosphate acyltransferase delta (378 aa).

Residues 11–31 traverse the membrane as a helical segment; that stretch reads FLCHLVFCYVFIASGLIINTV. An HXXXXD motif motif is present at residues 96–101; the sequence is HKFEID. The next 3 helical transmembrane spans lie at 125 to 145, 307 to 327, and 338 to 358; these read ELAYVPIIGWMWYFTEMVFCS, TLVNWLFWASLVLYPFFQFLV, and LASFILVFFVASMGVRWMIGV.

This sequence belongs to the 1-acyl-sn-glycerol-3-phosphate acyltransferase family.

It is found in the endoplasmic reticulum membrane. It carries out the reaction a 1-acyl-sn-glycero-3-phosphate + an acyl-CoA = a 1,2-diacyl-sn-glycero-3-phosphate + CoA. The catalysed reaction is (4Z,7Z,10Z,13Z,16Z,19Z)-docosahexaenoyl-CoA + 1-hexadecanoyl-sn-glycero-3-phosphate = 1-hexadecanoyl-2-(4Z,7Z,10Z,13Z,16Z,19Z-docosahexaenoyl)-sn-glycero-3-phosphate + CoA. It catalyses the reaction 1-octadecanoyl-sn-glycero-3-phosphate + (9Z,12Z)-octadecadienoyl-CoA = 1-octadecanoyl-2-(9Z,12Z-octadecadienoyl)-sn-glycero-3-phosphate + CoA. The enzyme catalyses 1-octadecanoyl-sn-glycero-3-phosphate + (4Z,7Z,10Z,13Z,16Z,19Z)-docosahexaenoyl-CoA = 1-octadecanoyl-2-(4Z,7Z,10Z,13Z,16Z,19Z-docosahexaenoyl)-sn-glycero-3-phosphate + CoA. It carries out the reaction (4Z,7Z,10Z,13Z,16Z,19Z)-docosahexaenoyl-CoA + 1-(9Z-octadecenoyl)-sn-glycero-3-phosphate = 1-(9Z-octadecenoyl)-2-(4Z,7Z,10Z,13Z,16Z,19Z-docosahexaenoyl)-sn-glycero-3-phosphate + CoA. It functions in the pathway phospholipid metabolism; CDP-diacylglycerol biosynthesis; CDP-diacylglycerol from sn-glycerol 3-phosphate: step 2/3. In terms of biological role, converts 1-acyl-sn-glycerol-3-phosphate (lysophosphatidic acid or LPA) into 1,2-diacyl-sn-glycerol-3-phosphate (phosphatidic acid or PA) by incorporating an acyl moiety at the sn-2 position of the glycerol backbone. Exhibits high acyl-CoA specificity for polyunsaturated fatty acyl-CoA, especially docosahexaenoyl-CoA (22:6-CoA, DHA-CoA). In Macaca fascicularis (Crab-eating macaque), this protein is 1-acyl-sn-glycerol-3-phosphate acyltransferase delta (AGPAT4).